The chain runs to 229 residues: Lipoprotein-releasing system ATP-binding protein LolD (229 aa).

An ABC transporter domain is found at 7-229; it reads LQCINLTKSF…KNGQLFNNKN (223 aa). 43 to 50 is a binding site for ATP; the sequence is GKSGSGKS.

It belongs to the ABC transporter superfamily. Lipoprotein translocase (TC 3.A.1.125) family. As to quaternary structure, the complex is composed of two ATP-binding proteins (LolD) and two transmembrane proteins (LolC and LolE).

Its subcellular location is the cell inner membrane. In terms of biological role, part of the ABC transporter complex LolCDE involved in the translocation of mature outer membrane-directed lipoproteins, from the inner membrane to the periplasmic chaperone, LolA. Responsible for the formation of the LolA-lipoprotein complex in an ATP-dependent manner. The chain is Lipoprotein-releasing system ATP-binding protein LolD from Buchnera aphidicola subsp. Schizaphis graminum (strain Sg).